The following is a 275-amino-acid chain: Bis(5'-nucleosyl)-tetraphosphatase, symmetrical (275 aa).

The protein belongs to the Ap4A hydrolase family.

It catalyses the reaction P(1),P(4)-bis(5'-adenosyl) tetraphosphate + H2O = 2 ADP + 2 H(+). Its function is as follows. Hydrolyzes diadenosine 5',5'''-P1,P4-tetraphosphate to yield ADP. The sequence is that of Bis(5'-nucleosyl)-tetraphosphatase, symmetrical from Hamiltonella defensa subsp. Acyrthosiphon pisum (strain 5AT).